Here is a 417-residue protein sequence, read N- to C-terminus: UDP-N-acetylglucosamine 1-carboxyvinyltransferase 2 (417 aa).

A phosphoenolpyruvate-binding site is contributed by 22-23 (KN). R92 is a binding site for UDP-N-acetyl-alpha-D-glucosamine. C116 (proton donor) is an active-site residue. C116 bears the 2-(S-cysteinyl)pyruvic acid O-phosphothioketal mark. Residues 121–125 (RPIDL), D305, and I327 contribute to the UDP-N-acetyl-alpha-D-glucosamine site.

The protein belongs to the EPSP synthase family. MurA subfamily.

It localises to the cytoplasm. The catalysed reaction is phosphoenolpyruvate + UDP-N-acetyl-alpha-D-glucosamine = UDP-N-acetyl-3-O-(1-carboxyvinyl)-alpha-D-glucosamine + phosphate. It functions in the pathway cell wall biogenesis; peptidoglycan biosynthesis. Its function is as follows. Cell wall formation. Adds enolpyruvyl to UDP-N-acetylglucosamine. This chain is UDP-N-acetylglucosamine 1-carboxyvinyltransferase 2, found in Caldanaerobacter subterraneus subsp. tengcongensis (strain DSM 15242 / JCM 11007 / NBRC 100824 / MB4) (Thermoanaerobacter tengcongensis).